A 524-amino-acid polypeptide reads, in one-letter code: Decreased expression in renal and prostate cancer protein (524 aa).

A compositionally biased stretch (basic and acidic residues) spans 1-12 (MKEPRIFPRERP). Disordered stretches follow at residues 1–43 (MKEP…TGHP) and 64–252 (PFPR…LDAR). Residues 129-148 (LNPRTGALPGPGPLSNPRLG) are compositionally biased toward low complexity. The span at 163-181 (GLLGAGPDPRGGGPMGPGS) shows a compositional bias: gly residues. Residue serine 302 is modified to Phosphoserine. Over residues 312 to 323 (PMGPNSGPSSRG) the composition is skewed to low complexity. The interval 312-332 (PMGPNSGPSSRGIGLPGPNPS) is disordered. The residue at position 364 (arginine 364) is an Asymmetric dimethylarginine. Residue arginine 387 is modified to Omega-N-methylarginine. The residue at position 423 (serine 423) is a Phosphoserine.

The protein belongs to the DERPC family. Ubiquitously expressed, with abundant expression in kidney, skeletal muscle, testis, liver, ovary, and heart and moderate expression in prostate. Expression is significantly reduced in renal and prostate tumors. No differential expression in breast cancer cells, between lobular carcinoma and normal lobules.

It is found in the nucleus. Functionally, potential tumor suppressor. Inhibits prostate tumor cell growth, when overexpressed. In Homo sapiens (Human), this protein is Decreased expression in renal and prostate cancer protein.